Reading from the N-terminus, the 235-residue chain is 5'-methylthioadenosine/S-adenosylhomocysteine nucleosidase (235 aa).

E12 acts as the Proton acceptor in catalysis. Residues G78, I152, and M173–E174 each bind substrate. The active-site Proton donor is the D197.

This sequence belongs to the PNP/UDP phosphorylase family. MtnN subfamily. In terms of assembly, homodimer.

The enzyme catalyses S-adenosyl-L-homocysteine + H2O = S-(5-deoxy-D-ribos-5-yl)-L-homocysteine + adenine. It catalyses the reaction S-methyl-5'-thioadenosine + H2O = 5-(methylsulfanyl)-D-ribose + adenine. The catalysed reaction is 5'-deoxyadenosine + H2O = 5-deoxy-D-ribose + adenine. Its pathway is amino-acid biosynthesis; L-methionine biosynthesis via salvage pathway; S-methyl-5-thio-alpha-D-ribose 1-phosphate from S-methyl-5'-thioadenosine (hydrolase route): step 1/2. In terms of biological role, catalyzes the irreversible cleavage of the glycosidic bond in both 5'-methylthioadenosine (MTA) and S-adenosylhomocysteine (SAH/AdoHcy) to adenine and the corresponding thioribose, 5'-methylthioribose and S-ribosylhomocysteine, respectively. Also cleaves 5'-deoxyadenosine, a toxic by-product of radical S-adenosylmethionine (SAM) enzymes, into 5-deoxyribose and adenine. Thus, is required for in vivo function of the radical SAM enzymes biotin synthase and lipoic acid synthase, that are inhibited by 5'-deoxyadenosine accumulation. The chain is 5'-methylthioadenosine/S-adenosylhomocysteine nucleosidase from Buchnera aphidicola subsp. Schizaphis graminum (strain Sg).